Here is a 205-residue protein sequence, read N- to C-terminus: Holliday junction branch migration complex subunit RuvA (205 aa).

The segment at 1-62 is domain I; it reads MFEYVTGYVE…EDIMALYGFK (62 aa). The domain II stretch occupies residues 63–141; the sequence is TREERLLFTK…DVVPDAFVDL (79 aa). The interval 142–152 is flexible linker; that stretch reads FSDTERFDEKK. The domain III stretch occupies residues 153 to 205; the sequence is GSSAELDEALEALRALGYAEREVSRVVPELLKESLTTDQYIKKALSLLLNGKR.

The protein belongs to the RuvA family. In terms of assembly, homotetramer. Forms an RuvA(8)-RuvB(12)-Holliday junction (HJ) complex. HJ DNA is sandwiched between 2 RuvA tetramers; dsDNA enters through RuvA and exits via RuvB. An RuvB hexamer assembles on each DNA strand where it exits the tetramer. Each RuvB hexamer is contacted by two RuvA subunits (via domain III) on 2 adjacent RuvB subunits; this complex drives branch migration. In the full resolvosome a probable DNA-RuvA(4)-RuvB(12)-RuvC(2) complex forms which resolves the HJ.

Its subcellular location is the cytoplasm. Functionally, the RuvA-RuvB-RuvC complex processes Holliday junction (HJ) DNA during genetic recombination and DNA repair, while the RuvA-RuvB complex plays an important role in the rescue of blocked DNA replication forks via replication fork reversal (RFR). RuvA specifically binds to HJ cruciform DNA, conferring on it an open structure. The RuvB hexamer acts as an ATP-dependent pump, pulling dsDNA into and through the RuvAB complex. HJ branch migration allows RuvC to scan DNA until it finds its consensus sequence, where it cleaves and resolves the cruciform DNA. The chain is Holliday junction branch migration complex subunit RuvA from Bacillus cereus (strain ATCC 14579 / DSM 31 / CCUG 7414 / JCM 2152 / NBRC 15305 / NCIMB 9373 / NCTC 2599 / NRRL B-3711).